Consider the following 451-residue polypeptide: Trigger factor (451 aa).

The 86-residue stretch at 173–258 (GDRVTVDFVG…LKKVEWAHLP (86 aa)) folds into the PPIase FKBP-type domain.

This sequence belongs to the FKBP-type PPIase family. Tig subfamily.

It localises to the cytoplasm. The catalysed reaction is [protein]-peptidylproline (omega=180) = [protein]-peptidylproline (omega=0). Its function is as follows. Involved in protein export. Acts as a chaperone by maintaining the newly synthesized protein in an open conformation. Functions as a peptidyl-prolyl cis-trans isomerase. The sequence is that of Trigger factor from Cupriavidus taiwanensis (strain DSM 17343 / BCRC 17206 / CCUG 44338 / CIP 107171 / LMG 19424 / R1) (Ralstonia taiwanensis (strain LMG 19424)).